Here is a 313-residue protein sequence, read N- to C-terminus: Protoheme IX farnesyltransferase (313 aa).

A run of 9 helical transmembrane segments spans residues 35–55, 56–76, 98–118, 120–140, 153–173, 180–200, 226–246, 248–268, and 285–305; these read LVIFTALVGLLLAPGYIHPVL, AFTSILCIAVGAGASGALNMW, VSKPEALTFGLVLSFFSVVTL, ILVNWFAAALLAFTIFFYVVI, IVIGGAAGALPPVVAWAAAAG, MLLFAIIFFWTPPHFWALALF, ILLYTIVLVAVAFAPWPLGYF, AIYGITSLALGGWMLLLTLRV, and FKFSILYLFALFAVLLLEVIV.

Belongs to the UbiA prenyltransferase family. Protoheme IX farnesyltransferase subfamily.

It is found in the cell inner membrane. It carries out the reaction heme b + (2E,6E)-farnesyl diphosphate + H2O = Fe(II)-heme o + diphosphate. The protein operates within porphyrin-containing compound metabolism; heme O biosynthesis; heme O from protoheme: step 1/1. Functionally, converts heme B (protoheme IX) to heme O by substitution of the vinyl group on carbon 2 of heme B porphyrin ring with a hydroxyethyl farnesyl side group. The chain is Protoheme IX farnesyltransferase from Rhodopseudomonas palustris (strain BisB18).